A 180-amino-acid polypeptide reads, in one-letter code: dCTP deaminase, dUMP-forming (180 aa).

Residues 100 to 105 (RSSLGR), Asp-117, 125 to 127 (TLE), Gln-146, Tyr-160, and Gln-167 each bind dCTP. The Proton donor/acceptor role is filled by Glu-127.

It belongs to the dCTP deaminase family. As to quaternary structure, homotrimer.

It carries out the reaction dCTP + 2 H2O = dUMP + NH4(+) + diphosphate. The protein operates within pyrimidine metabolism; dUMP biosynthesis; dUMP from dCTP: step 1/1. In terms of biological role, bifunctional enzyme that catalyzes both the deamination of dCTP to dUTP and the hydrolysis of dUTP to dUMP without releasing the toxic dUTP intermediate. This is dCTP deaminase, dUMP-forming from Sulfurihydrogenibium sp. (strain YO3AOP1).